The chain runs to 585 residues: A-type ATP synthase subunit A (585 aa).

231–238 (GPFGSGKT) provides a ligand contact to ATP.

This sequence belongs to the ATPase alpha/beta chains family. As to quaternary structure, has multiple subunits with at least A(3), B(3), C, D, E, F, H, I and proteolipid K(x).

The protein localises to the cell membrane. The enzyme catalyses ATP + H2O + 4 H(+)(in) = ADP + phosphate + 5 H(+)(out). Its function is as follows. Component of the A-type ATP synthase that produces ATP from ADP in the presence of a proton gradient across the membrane. The A chain is the catalytic subunit. This is A-type ATP synthase subunit A from Thermococcus onnurineus (strain NA1).